Here is a 384-residue protein sequence, read N- to C-terminus: 8-amino-7-oxononanoate synthase (384 aa).

Arginine 21 contributes to the substrate binding site. 108 to 109 (GF) is a binding site for pyridoxal 5'-phosphate. Histidine 133 serves as a coordination point for substrate. Pyridoxal 5'-phosphate contacts are provided by serine 179, histidine 207, and threonine 233. Lysine 236 carries the post-translational modification N6-(pyridoxal phosphate)lysine. Substrate is bound at residue threonine 352.

The protein belongs to the class-II pyridoxal-phosphate-dependent aminotransferase family. BioF subfamily. Homodimer. Requires pyridoxal 5'-phosphate as cofactor.

It catalyses the reaction 6-carboxyhexanoyl-[ACP] + L-alanine + H(+) = (8S)-8-amino-7-oxononanoate + holo-[ACP] + CO2. Its pathway is cofactor biosynthesis; biotin biosynthesis. Catalyzes the decarboxylative condensation of pimeloyl-[acyl-carrier protein] and L-alanine to produce 8-amino-7-oxononanoate (AON), [acyl-carrier protein], and carbon dioxide. The protein is 8-amino-7-oxononanoate synthase of Escherichia coli O6:H1 (strain CFT073 / ATCC 700928 / UPEC).